The primary structure comprises 264 residues: MKSIKRIGLCISLLILIIFVTSCDGDNKITGDSKEEQIKKSFAKTLEMYPIKNLEDLYDKEGYRDGEFKKGDKGTWVIRSEMKIQLKGENLESRGVVLEINRNTRTAKGNYIVREVVEDSDGMTHNHTKRYPVKMENNKIIPLKQIVDEKVKKEIEEFKFFVQYGNFKELENYKDGEVTYNPEAPIYSAQYQLKNSDYNVEQLRKRYNIPTQKAPKLLLKGSGNLKGSSVGYKNIEFTFVENKGENIYFTDSVYFNPSEDKYNY.

Positions Met-1–Ser-22 are cleaved as a signal peptide. The N-palmitoyl cysteine moiety is linked to residue Cys-23. Cys-23 carries the S-diacylglycerol cysteine lipid modification.

The protein belongs to the staphylococcal tandem lipoprotein family.

The protein resides in the cell membrane. This is an uncharacterized protein from Staphylococcus aureus (strain MRSA252).